A 98-amino-acid polypeptide reads, in one-letter code: Feather keratin 4 (98 aa).

Serine 2 is subject to N-acetylserine.

Belongs to the avian keratin family. As to quaternary structure, the avian keratins (F-ker, S-ker, C-ker and B-ker) are a complex mixture of very similar polypeptides.

In Gallus gallus (Chicken), this protein is Feather keratin 4.